The primary structure comprises 300 residues: Phosphatidylserine decarboxylase proenzyme (300 aa).

Residues aspartate 117, histidine 173, and serine 260 each act as charge relay system; for autoendoproteolytic cleavage activity in the active site. The active-site Schiff-base intermediate with substrate; via pyruvic acid; for decarboxylase activity is serine 260. The residue at position 260 (serine 260) is a Pyruvic acid (Ser); by autocatalysis.

Belongs to the phosphatidylserine decarboxylase family. PSD-B subfamily. Prokaryotic type II sub-subfamily. As to quaternary structure, heterodimer of a large membrane-associated beta subunit and a small pyruvoyl-containing alpha subunit. Pyruvate serves as cofactor. In terms of processing, is synthesized initially as an inactive proenzyme. Formation of the active enzyme involves a self-maturation process in which the active site pyruvoyl group is generated from an internal serine residue via an autocatalytic post-translational modification. Two non-identical subunits are generated from the proenzyme in this reaction, and the pyruvate is formed at the N-terminus of the alpha chain, which is derived from the carboxyl end of the proenzyme. The autoendoproteolytic cleavage occurs by a canonical serine protease mechanism, in which the side chain hydroxyl group of the serine supplies its oxygen atom to form the C-terminus of the beta chain, while the remainder of the serine residue undergoes an oxidative deamination to produce ammonia and the pyruvoyl prosthetic group on the alpha chain. During this reaction, the Ser that is part of the protease active site of the proenzyme becomes the pyruvoyl prosthetic group, which constitutes an essential element of the active site of the mature decarboxylase.

It localises to the cell membrane. It catalyses the reaction a 1,2-diacyl-sn-glycero-3-phospho-L-serine + H(+) = a 1,2-diacyl-sn-glycero-3-phosphoethanolamine + CO2. Its pathway is phospholipid metabolism; phosphatidylethanolamine biosynthesis; phosphatidylethanolamine from CDP-diacylglycerol: step 2/2. Functionally, catalyzes the formation of phosphatidylethanolamine (PtdEtn) from phosphatidylserine (PtdSer). This Fusobacterium nucleatum subsp. nucleatum (strain ATCC 25586 / DSM 15643 / BCRC 10681 / CIP 101130 / JCM 8532 / KCTC 2640 / LMG 13131 / VPI 4355) protein is Phosphatidylserine decarboxylase proenzyme.